Reading from the N-terminus, the 80-residue chain is Translation initiation factor IF-1 (80 aa).

In terms of domain architecture, S1-like spans 6–80 (EKRKKEESDV…TSRGRIVYRK (75 aa)).

It belongs to the IF-1 family. Component of the 30S ribosomal translation pre-initiation complex which assembles on the 30S ribosome in the order IF-2 and IF-3, IF-1 and N-formylmethionyl-tRNA(fMet); mRNA recruitment can occur at any time during PIC assembly.

The protein localises to the cytoplasm. Functionally, one of the essential components for the initiation of protein synthesis. Stabilizes the binding of IF-2 and IF-3 on the 30S subunit to which N-formylmethionyl-tRNA(fMet) subsequently binds. Helps modulate mRNA selection, yielding the 30S pre-initiation complex (PIC). Upon addition of the 50S ribosomal subunit IF-1, IF-2 and IF-3 are released leaving the mature 70S translation initiation complex. The chain is Translation initiation factor IF-1 from Deinococcus geothermalis (strain DSM 11300 / CIP 105573 / AG-3a).